Reading from the N-terminus, the 156-residue chain is SPbeta prophage-derived uncharacterized protein YosH (156 aa).

The polypeptide is SPbeta prophage-derived uncharacterized protein YosH (yosH) (Bacillus subtilis (strain 168)).